The sequence spans 382 residues: Chaperone protein DnaJ 1 (382 aa).

The 65-residue stretch at 4-68 folds into the J domain; sequence DYYGILGVDR…DKRRIVDMGG (65 aa). The CR-type zinc-finger motif lies at 134–216; the sequence is GAKKDLTLDT…CAGDGRVRAR (83 aa). Residues cysteine 147, cysteine 150, cysteine 164, cysteine 167, cysteine 190, cysteine 193, cysteine 204, and cysteine 207 each contribute to the Zn(2+) site. CXXCXGXG motif repeat units follow at residues 147 to 154, 164 to 171, 190 to 197, and 204 to 211; these read CTKCHGSG, CGTCNGAG, CHTCDGTG, and CTECAGDG.

This sequence belongs to the DnaJ family. Homodimer. It depends on Zn(2+) as a cofactor.

It is found in the cytoplasm. Its function is as follows. Participates actively in the response to hyperosmotic and heat shock by preventing the aggregation of stress-denatured proteins and by disaggregating proteins, also in an autonomous, DnaK-independent fashion. Unfolded proteins bind initially to DnaJ; upon interaction with the DnaJ-bound protein, DnaK hydrolyzes its bound ATP, resulting in the formation of a stable complex. GrpE releases ADP from DnaK; ATP binding to DnaK triggers the release of the substrate protein, thus completing the reaction cycle. Several rounds of ATP-dependent interactions between DnaJ, DnaK and GrpE are required for fully efficient folding. Also involved, together with DnaK and GrpE, in the DNA replication of plasmids through activation of initiation proteins. The chain is Chaperone protein DnaJ 1 from Corynebacterium glutamicum (strain ATCC 13032 / DSM 20300 / JCM 1318 / BCRC 11384 / CCUG 27702 / LMG 3730 / NBRC 12168 / NCIMB 10025 / NRRL B-2784 / 534).